Consider the following 72-residue polypeptide: Translation initiation factor IF-1 (72 aa).

In terms of domain architecture, S1-like spans Met-1–Lys-72.

The protein belongs to the IF-1 family. Component of the 30S ribosomal translation pre-initiation complex which assembles on the 30S ribosome in the order IF-2 and IF-3, IF-1 and N-formylmethionyl-tRNA(fMet); mRNA recruitment can occur at any time during PIC assembly.

The protein resides in the cytoplasm. Functionally, one of the essential components for the initiation of protein synthesis. Stabilizes the binding of IF-2 and IF-3 on the 30S subunit to which N-formylmethionyl-tRNA(fMet) subsequently binds. Helps modulate mRNA selection, yielding the 30S pre-initiation complex (PIC). Upon addition of the 50S ribosomal subunit IF-1, IF-2 and IF-3 are released leaving the mature 70S translation initiation complex. The chain is Translation initiation factor IF-1 from Clostridium novyi (strain NT).